A 216-amino-acid polypeptide reads, in one-letter code: Adenylate kinase (216 aa).

10–15 (GAGKGT) contacts ATP. Positions 30–59 (STGDIFRANIKEKTPLGIEAKRYIDNGQLV) are NMP. Residues threonine 31, arginine 36, 57-59 (QLV), 85-88 (GFPR), and glutamine 92 contribute to the AMP site. An LID region spans residues 126-163 (GRRVCTSCGASYHIRFNPPKIEGKCDICDNELIQRKDD). Arginine 127 is an ATP binding site. Cysteine 130 and cysteine 133 together coordinate Zn(2+). ATP is bound at residue 136-137 (SY). Zn(2+) is bound by residues cysteine 150 and cysteine 153. AMP contacts are provided by arginine 160 and arginine 171. Residue glutamate 199 coordinates ATP.

The protein belongs to the adenylate kinase family. Monomer.

It localises to the cytoplasm. It carries out the reaction AMP + ATP = 2 ADP. It functions in the pathway purine metabolism; AMP biosynthesis via salvage pathway; AMP from ADP: step 1/1. Catalyzes the reversible transfer of the terminal phosphate group between ATP and AMP. Plays an important role in cellular energy homeostasis and in adenine nucleotide metabolism. The chain is Adenylate kinase from Clostridium botulinum (strain Langeland / NCTC 10281 / Type F).